Reading from the N-terminus, the 273-residue chain is Homeobox protein HMX2 (273 aa).

The interval 1–152 (MGSKEDAGKG…RQAGAAKKKT (152 aa)) is disordered. The span at 93–102 (KGSGGSGPGG) shows a compositional bias: gly residues. The span at 114–123 (SDFKEEKERL) shows a compositional bias: basic and acidic residues. A DNA-binding region (homeobox) is located at residues 149–208 (KKKTRTVFSRSQVYQLESTFDMKRYLSSSERACLASSLQLTETQVKTWFQNRRNKWKRQL).

It belongs to the HMX homeobox family.

Its subcellular location is the nucleus. Functionally, transcription factor involved in specification of neuronal cell types and which is required for inner ear and hypothalamus development. The chain is Homeobox protein HMX2 (HMX2) from Homo sapiens (Human).